A 469-amino-acid polypeptide reads, in one-letter code: Sulfate adenylyltransferase subunit 1 (469 aa).

One can recognise a tr-type G domain in the interval 22–224; that stretch reads KDLMRFITCG…NMTWYPGSPL (203 aa). Residues 31-38 are G1; sequence GSVDDGKS. 31–38 contacts GTP; that stretch reads GSVDDGKS. The tract at residues 89–93 is G2; the sequence is GITID. The tract at residues 110–113 is G3; the sequence is DTPG. Residues 110–114 and 165–168 each bind GTP; these read DTPGH and NKMD. A G4 region spans residues 165–168; that stretch reads NKMD. The segment at 202–204 is G5; that stretch reads SAL.

The protein belongs to the TRAFAC class translation factor GTPase superfamily. Classic translation factor GTPase family. CysN/NodQ subfamily. Heterodimer composed of CysD, the smaller subunit, and CysN.

The catalysed reaction is sulfate + ATP + H(+) = adenosine 5'-phosphosulfate + diphosphate. Its pathway is sulfur metabolism; hydrogen sulfide biosynthesis; sulfite from sulfate: step 1/3. Functionally, with CysD forms the ATP sulfurylase (ATPS) that catalyzes the adenylation of sulfate producing adenosine 5'-phosphosulfate (APS) and diphosphate, the first enzymatic step in sulfur assimilation pathway. APS synthesis involves the formation of a high-energy phosphoric-sulfuric acid anhydride bond driven by GTP hydrolysis by CysN coupled to ATP hydrolysis by CysD. The protein is Sulfate adenylyltransferase subunit 1 of Psychromonas ingrahamii (strain DSM 17664 / CCUG 51855 / 37).